Consider the following 437-residue polypeptide: Glutamate-1-semialdehyde 2,1-aminomutase (437 aa).

Lysine 273 is subject to N6-(pyridoxal phosphate)lysine.

Belongs to the class-III pyridoxal-phosphate-dependent aminotransferase family. HemL subfamily. As to quaternary structure, homodimer. The cofactor is pyridoxal 5'-phosphate.

It localises to the cytoplasm. It catalyses the reaction (S)-4-amino-5-oxopentanoate = 5-aminolevulinate. It functions in the pathway porphyrin-containing compound metabolism; protoporphyrin-IX biosynthesis; 5-aminolevulinate from L-glutamyl-tRNA(Glu): step 2/2. In Chlamydia felis (strain Fe/C-56) (Chlamydophila felis), this protein is Glutamate-1-semialdehyde 2,1-aminomutase.